Reading from the N-terminus, the 192-residue chain is Peptide deformylase 1 (192 aa).

Positions 101 and 143 each coordinate Fe cation. Glu-144 is an active-site residue. His-147 serves as a coordination point for Fe cation.

Belongs to the polypeptide deformylase family. Fe(2+) is required as a cofactor.

It carries out the reaction N-terminal N-formyl-L-methionyl-[peptide] + H2O = N-terminal L-methionyl-[peptide] + formate. In terms of biological role, removes the formyl group from the N-terminal Met of newly synthesized proteins. Requires at least a dipeptide for an efficient rate of reaction. N-terminal L-methionine is a prerequisite for activity but the enzyme has broad specificity at other positions. The polypeptide is Peptide deformylase 1 (Prochlorococcus marinus (strain MIT 9313)).